Reading from the N-terminus, the 477-residue chain is Glycogen synthase (477 aa).

Lys-15 is an ADP-alpha-D-glucose binding site.

It belongs to the glycosyltransferase 1 family. Bacterial/plant glycogen synthase subfamily.

It carries out the reaction [(1-&gt;4)-alpha-D-glucosyl](n) + ADP-alpha-D-glucose = [(1-&gt;4)-alpha-D-glucosyl](n+1) + ADP + H(+). It participates in glycan biosynthesis; glycogen biosynthesis. Functionally, synthesizes alpha-1,4-glucan chains using ADP-glucose. The chain is Glycogen synthase from Streptococcus pneumoniae (strain 70585).